The sequence spans 286 residues: uncharacterized protein (286 aa).

Disordered stretches follow at residues 59 to 89 and 225 to 286; these read PESA…PGAK and RQRK…EDTR. The segment covering 69 to 85 has biased composition (low complexity); that stretch reads AEAESAGTAAATESHGA.

This is an uncharacterized protein from Mus musculus (Mouse).